Consider the following 192-residue polypeptide: Putative acetyltransferase SH0499 (192 aa).

It belongs to the transferase hexapeptide repeat family.

The polypeptide is Putative acetyltransferase SH0499 (Staphylococcus haemolyticus (strain JCSC1435)).